A 291-amino-acid chain; its full sequence is Release factor glutamine methyltransferase (291 aa).

S-adenosyl-L-methionine-binding positions include Gly-127 to Gly-131, Asp-150, Trp-179, and Asn-196. Asn-196 to Tyr-199 is a binding site for substrate.

Belongs to the protein N5-glutamine methyltransferase family. PrmC subfamily.

The catalysed reaction is L-glutaminyl-[peptide chain release factor] + S-adenosyl-L-methionine = N(5)-methyl-L-glutaminyl-[peptide chain release factor] + S-adenosyl-L-homocysteine + H(+). In terms of biological role, methylates the class 1 translation termination release factors RF1/PrfA and RF2/PrfB on the glutamine residue of the universally conserved GGQ motif. The polypeptide is Release factor glutamine methyltransferase (Thermosynechococcus vestitus (strain NIES-2133 / IAM M-273 / BP-1)).